Consider the following 445-residue polypeptide: Xylose isomerase (445 aa).

Residues H107 and D110 contribute to the active site. Residues E238, E274, H277, D302, D313, D315, and D345 each coordinate Mg(2+).

Belongs to the xylose isomerase family. As to quaternary structure, homotetramer. Mg(2+) serves as cofactor.

It localises to the cytoplasm. It catalyses the reaction alpha-D-xylose = alpha-D-xylulofuranose. This Bacillus subtilis (strain 168) protein is Xylose isomerase (xylA).